Consider the following 353-residue polypeptide: ATP-dependent kinase YFH7 (353 aa).

31 to 39 (GSPGSGKST) contributes to the ATP binding site.

This sequence belongs to the YFH7 family.

In terms of biological role, ATP-dependent kinase that could be involved in endoplasmic reticulum membrane assembly. This Saccharomyces cerevisiae (strain JAY291) (Baker's yeast) protein is ATP-dependent kinase YFH7 (YFH7).